Reading from the N-terminus, the 333-residue chain is Beta-ketoacyl-[acyl-carrier-protein] synthase III (333 aa).

Active-site residues include Cys116 and His258. The segment at 259 to 263 (QANQR) is ACP-binding. Asn288 is a catalytic residue.

It belongs to the thiolase-like superfamily. FabH family. In terms of assembly, homodimer.

The protein localises to the cytoplasm. It catalyses the reaction malonyl-[ACP] + acetyl-CoA + H(+) = 3-oxobutanoyl-[ACP] + CO2 + CoA. Its pathway is lipid metabolism; fatty acid biosynthesis. Catalyzes the condensation reaction of fatty acid synthesis by the addition to an acyl acceptor of two carbons from malonyl-ACP. Catalyzes the first condensation reaction which initiates fatty acid synthesis and may therefore play a role in governing the total rate of fatty acid production. Possesses both acetoacetyl-ACP synthase and acetyl transacylase activities. Its substrate specificity determines the biosynthesis of branched-chain and/or straight-chain of fatty acids. This Microcystis aeruginosa (strain NIES-843 / IAM M-2473) protein is Beta-ketoacyl-[acyl-carrier-protein] synthase III.